Here is a 443-residue protein sequence, read N- to C-terminus: Eukaryotic translation initiation factor 3 subunit M (443 aa).

The PCI domain occupies 205-375 (GLYQSTGNLA…SLIRIHSISS (171 aa)). The interval 413 to 443 (ETVAQQGLGQQRRGGKRREEKKEKEDKEEQE) is disordered. The span at 429-443 (RREEKKEKEDKEEQE) shows a compositional bias: basic and acidic residues.

It belongs to the eIF-3 subunit M family. In terms of assembly, component of the eukaryotic translation initiation factor 3 (eIF-3) complex.

It is found in the cytoplasm. Component of the eukaryotic translation initiation factor 3 (eIF-3) complex, which is involved in protein synthesis of a specialized repertoire of mRNAs and, together with other initiation factors, stimulates binding of mRNA and methionyl-tRNAi to the 40S ribosome. The eIF-3 complex specifically targets and initiates translation of a subset of mRNAs involved in cell proliferation. This is Eukaryotic translation initiation factor 3 subunit M from Cryptococcus neoformans var. neoformans serotype D (strain B-3501A) (Filobasidiella neoformans).